Reading from the N-terminus, the 99-residue chain is Aspartyl/glutamyl-tRNA(Asn/Gln) amidotransferase subunit C (99 aa).

This sequence belongs to the GatC family. In terms of assembly, heterotrimer of A, B and C subunits.

The catalysed reaction is L-glutamyl-tRNA(Gln) + L-glutamine + ATP + H2O = L-glutaminyl-tRNA(Gln) + L-glutamate + ADP + phosphate + H(+). It catalyses the reaction L-aspartyl-tRNA(Asn) + L-glutamine + ATP + H2O = L-asparaginyl-tRNA(Asn) + L-glutamate + ADP + phosphate + 2 H(+). Allows the formation of correctly charged Asn-tRNA(Asn) or Gln-tRNA(Gln) through the transamidation of misacylated Asp-tRNA(Asn) or Glu-tRNA(Gln) in organisms which lack either or both of asparaginyl-tRNA or glutaminyl-tRNA synthetases. The reaction takes place in the presence of glutamine and ATP through an activated phospho-Asp-tRNA(Asn) or phospho-Glu-tRNA(Gln). The sequence is that of Aspartyl/glutamyl-tRNA(Asn/Gln) amidotransferase subunit C from Variovorax paradoxus (strain S110).